The sequence spans 1909 residues: NFX1-type zinc finger-containing protein 1 (1909 aa).

2 stretches are compositionally biased toward basic and acidic residues: residues 1–12 and 76–107; these read MEDRRPHLEARP and RNQE…EGRS. Disordered stretches follow at residues 1 to 133 and 787 to 813; these read MEDR…QPQQ and TQSA…EEEG. Residues 113–122 show a composition bias toward polar residues; the sequence is SSDTFQQWHT. A compositionally biased stretch (acidic residues) spans 802–813; sequence EGEEEEEGEEEG. Residues 939–964 adopt a coiled-coil conformation; sequence RRRILSYERQYRTWAERMAELRLQED. 4 consecutive NF-X1-type zinc fingers follow at residues 1291–1313, 1375–1393, 1433–1455, and 1463–1480; these read CGHV…QCMK, CGHR…LCSE, CGHP…RCQQ, and CSHK…PCQR. Positions 1733-1764 form a coiled coil; it reads LAKKRLSFSSQELSDLQSEIQRLTYLVNLLMR. The segment at 1818–1889 adopts an RZ-type zinc-finger fold; the sequence is ISDEERVQIV…LASEMDGAQH (72 aa). Zn(2+) is bound by residues Cys1840, His1844, Cys1860, and Cys1863.

This sequence belongs to the ZNFX1 family. As to quaternary structure, interacts with MAVS.

The protein resides in the mitochondrion outer membrane. It is found in the cytoplasm. Its subcellular location is the stress granule. RNA-binding protein that initiates the antiviral response and is required to restrict the replication of RNA viruses. Acts as a double-stranded RNA (dsRNA) sensor that recognizes viral RNA and then interacts with MAVS to initiate the type I interferon response. Also required for immunity against some bacteria, such as mycobacteria. The protein is NFX1-type zinc finger-containing protein 1 of Mus musculus (Mouse).